The primary structure comprises 512 residues: 2-isopropylmalate synthase (512 aa).

Residues 5–267 enclose the Pyruvate carboxyltransferase domain; sequence LYIFDTTLRD…DSRVDATQIV (263 aa). Mn(2+)-binding residues include Asp14, His202, His204, and Asn238. The segment at 393-512 is regulatory domain; the sequence is KLVSLKVVSE…EEKMNAQAAA (120 aa).

The protein belongs to the alpha-IPM synthase/homocitrate synthase family. LeuA type 1 subfamily. As to quaternary structure, homodimer. It depends on Mn(2+) as a cofactor.

It localises to the cytoplasm. The catalysed reaction is 3-methyl-2-oxobutanoate + acetyl-CoA + H2O = (2S)-2-isopropylmalate + CoA + H(+). The protein operates within amino-acid biosynthesis; L-leucine biosynthesis; L-leucine from 3-methyl-2-oxobutanoate: step 1/4. Catalyzes the condensation of the acetyl group of acetyl-CoA with 3-methyl-2-oxobutanoate (2-ketoisovalerate) to form 3-carboxy-3-hydroxy-4-methylpentanoate (2-isopropylmalate). The protein is 2-isopropylmalate synthase of Chromobacterium violaceum (strain ATCC 12472 / DSM 30191 / JCM 1249 / CCUG 213 / NBRC 12614 / NCIMB 9131 / NCTC 9757 / MK).